Reading from the N-terminus, the 668-residue chain is Biotin biosynthesis bifunctional protein BioWF (668 aa).

Arginine 293 is a substrate binding site. 380–381 (GY) is a binding site for pyridoxal 5'-phosphate. Residue histidine 405 coordinates substrate. Residues serine 451, 476–479 (DDAH), and 507–510 (TASK) contribute to the pyridoxal 5'-phosphate site. Lysine 510 bears the N6-(pyridoxal phosphate)lysine mark.

The protein in the N-terminal section; belongs to the BioW family. In the C-terminal section; belongs to the class-II pyridoxal-phosphate-dependent aminotransferase family. BioF subfamily. As to quaternary structure, homodimer. The cofactor is Mg(2+). Requires pyridoxal 5'-phosphate as cofactor.

The enzyme catalyses heptanedioate + ATP + CoA = 6-carboxyhexanoyl-CoA + AMP + diphosphate. The catalysed reaction is 6-carboxyhexanoyl-[ACP] + L-alanine + H(+) = (8S)-8-amino-7-oxononanoate + holo-[ACP] + CO2. Its pathway is metabolic intermediate metabolism; pimeloyl-CoA biosynthesis; pimeloyl-CoA from pimelate: step 1/1. The protein operates within cofactor biosynthesis; biotin biosynthesis. Catalyzes both the decarboxylative condensation of pimeloyl-[acyl-carrier protein] and L-alanine to produce 8-amino-7-oxononanoate (AON), [acyl-carrier protein], and carbon dioxide, and the transformation of pimelate into pimeloyl-CoA with concomitant hydrolysis of ATP to AMP. This Cutibacterium acnes (strain SK137) (Propionibacterium acnes) protein is Biotin biosynthesis bifunctional protein BioWF.